A 259-amino-acid chain; its full sequence is Dihydroorotate dehydrogenase B (NAD(+)), electron transfer subunit (259 aa).

The region spanning 3–103 (KKQGRLTIVK…LGPLGQGFPL (101 aa)) is the FAD-binding FR-type domain. Residues 54 to 57 (RPIS), 71 to 73 (IYR), and 78 to 79 (GT) contribute to the FAD site. 4 residues coordinate [2Fe-2S] cluster: C222, C227, C230, and C246.

This sequence belongs to the PyrK family. Heterotetramer of 2 PyrK and 2 PyrD type B subunits. The cofactor is [2Fe-2S] cluster. FAD serves as cofactor.

The protein operates within pyrimidine metabolism; UMP biosynthesis via de novo pathway; orotate from (S)-dihydroorotate (NAD(+) route): step 1/1. Functionally, responsible for channeling the electrons from the oxidation of dihydroorotate from the FMN redox center in the PyrD type B subunit to the ultimate electron acceptor NAD(+). The protein is Dihydroorotate dehydrogenase B (NAD(+)), electron transfer subunit of Shouchella clausii (strain KSM-K16) (Alkalihalobacillus clausii).